The primary structure comprises 130 residues: Small ribosomal subunit protein uS8B (130 aa).

Belongs to the universal ribosomal protein uS8 family.

This Drosophila melanogaster (Fruit fly) protein is Small ribosomal subunit protein uS8B (RpS15Ab).